We begin with the raw amino-acid sequence, 27 residues long: Phospholipase A2 1 (27 aa).

Belongs to the phospholipase A2 family. Group I subfamily. Requires Ca(2+) as cofactor. In terms of tissue distribution, expressed by the venom gland.

The protein resides in the secreted. It carries out the reaction a 1,2-diacyl-sn-glycero-3-phosphocholine + H2O = a 1-acyl-sn-glycero-3-phosphocholine + a fatty acid + H(+). Functionally, snake venom phospholipase A2 (PLA2) that inhibits neuromuscular transmission by blocking acetylcholine release from the nerve termini. PLA2 catalyzes the calcium-dependent hydrolysis of the 2-acyl groups in 3-sn-phosphoglycerides. The chain is Phospholipase A2 1 from Micrurus nigrocinctus (Central American coral snake).